We begin with the raw amino-acid sequence, 37 residues long: MKIGASVRKICEKCRLIRRRGRIIVICSNPRHKQRQG.

It belongs to the bacterial ribosomal protein bL36 family.

It localises to the plastid. The protein localises to the chloroplast. In Lotus japonicus (Lotus corniculatus var. japonicus), this protein is Large ribosomal subunit protein bL36c.